Here is a 576-residue protein sequence, read N- to C-terminus: 4-alpha-glucanotransferase DPE1, chloroplastic/amyloplastic (576 aa).

Residues 1–45 (MSILLRPSSSPSLCSSLKLFRLSSPDSLIDAAVLRNRTKPSQSFR) constitute a chloroplast transit peptide.

Belongs to the disproportionating enzyme family.

Its subcellular location is the plastid. It is found in the chloroplast. It localises to the amyloplast. It carries out the reaction Transfers a segment of a (1-&gt;4)-alpha-D-glucan to a new position in an acceptor, which may be glucose or a (1-&gt;4)-alpha-D-glucan.. In terms of biological role, chloroplastic alpha-glucanotransferase involved in maltotriose metabolism. Probably uses maltotriose as substrate to transfer a maltosyl unit from one molecule to another, resulting in glucose and maltopentaose. The latter can then be further metabolized to maltose and maltotriose by beta-amylase. Required for normal starch degradation in leaves. In Arabidopsis thaliana (Mouse-ear cress), this protein is 4-alpha-glucanotransferase DPE1, chloroplastic/amyloplastic (DPE1).